We begin with the raw amino-acid sequence, 440 residues long: Histidinol dehydrogenase (440 aa).

Residues Tyr134, Gln196, and Asn219 each contribute to the NAD(+) site. Substrate-binding residues include Ser242, Gln264, and His267. Zn(2+)-binding residues include Gln264 and His267. Catalysis depends on proton acceptor residues Glu332 and His333. Substrate is bound by residues His333, Asp366, Glu420, and His425. A Zn(2+)-binding site is contributed by Asp366. Residue His425 participates in Zn(2+) binding.

This sequence belongs to the histidinol dehydrogenase family. It depends on Zn(2+) as a cofactor.

The enzyme catalyses L-histidinol + 2 NAD(+) + H2O = L-histidine + 2 NADH + 3 H(+). Its pathway is amino-acid biosynthesis; L-histidine biosynthesis; L-histidine from 5-phospho-alpha-D-ribose 1-diphosphate: step 9/9. Its function is as follows. Catalyzes the sequential NAD-dependent oxidations of L-histidinol to L-histidinaldehyde and then to L-histidine. The protein is Histidinol dehydrogenase of Prochlorococcus marinus (strain SARG / CCMP1375 / SS120).